We begin with the raw amino-acid sequence, 407 residues long: MNKSNNTSNRRAERLTTIGDDAPFGNINFFTISFLSPEKVEKTKYLDIRGFKIHNGYNTLEVANSDAKELRKKYIDHDVYVTQLGKVYSWDDPTKTDSIEYEDEKLNELEKTRKEHTDKVKLMQQQFKNEFEIIRPNINTDRLNNQKKRLRDKLYSKGLISKAEYEMAETLDKPTNEIKDIAVCQKQAEEEAVKMANEDYLDENPPVGIKFGCISIYSPKFIRGLKQFCFKLRGLFESQEELEDRVNKLHKIYPNDRIHTFEVGKWIPYSDTIDDNEVSLNYLNYSMKCYLDNVANEREEFEKRKDNLQKQNEEAAKITKRKNRQEKRREKRLALKEAKNTAKTSVSSIPDTSSTTTSTNSTPTNTKSNSVQNINHQGPVELPDNMDPAINESDKEAIQNILDYIEN.

Coiled-coil stretches lie at residues 96-130 (TDSI…FKNE) and 287-345 (MKCY…AKTS). Residues 302 to 317 (EKRKDNLQKQNEEAAK) are compositionally biased toward basic and acidic residues. The interval 302–394 (EKRKDNLQKQ…NMDPAINESD (93 aa)) is disordered. Over residues 318–331 (ITKRKNRQEKRREK) the composition is skewed to basic residues. Positions 344-370 (TSVSSIPDTSSTTTSTNSTPTNTKSNS) are enriched in low complexity.

This is an uncharacterized protein from Acanthamoeba polyphaga (Amoeba).